Here is a 61-residue protein sequence, read N- to C-terminus: Large ribosomal subunit protein bL32 (61 aa).

A compositionally biased stretch (basic residues) spans 1–16; sequence MAVPKRKTSPSKRGMR. Positions 1 to 35 are disordered; it reads MAVPKRKTSPSKRGMRRSADGLKSATYVEDKNSGE.

This sequence belongs to the bacterial ribosomal protein bL32 family.

This Agrobacterium fabrum (strain C58 / ATCC 33970) (Agrobacterium tumefaciens (strain C58)) protein is Large ribosomal subunit protein bL32.